The sequence spans 189 residues: Elongation factor P (189 aa).

Belongs to the elongation factor P family.

The protein localises to the cytoplasm. It participates in protein biosynthesis; polypeptide chain elongation. Involved in peptide bond synthesis. Stimulates efficient translation and peptide-bond synthesis on native or reconstituted 70S ribosomes in vitro. Probably functions indirectly by altering the affinity of the ribosome for aminoacyl-tRNA, thus increasing their reactivity as acceptors for peptidyl transferase. This Pseudomonas fluorescens (strain Pf0-1) protein is Elongation factor P.